Here is a 589-residue protein sequence, read N- to C-terminus: Glucose starvation modulator protein 1 (589 aa).

The segment at residues 20-48 (CVFCHQKHLQCSNERPCKNCVKRNIGHEC) is a DNA-binding region (zn(2)-C6 fungal-type). Disordered stretches follow at residues 59–90 (LTGNGKGSSSKTKTPRKKLKSTPITASSPSVA), 218–240 (NNSNNTSHNDNFIAQNNNNNPEP), and 340–362 (ANGQTEDLLDHNKDDSRKNPGNG). The span at 80-90 (TPITASSPSVA) shows a compositional bias: polar residues. The segment covering 347–357 (LLDHNKDDSRK) has biased composition (basic and acidic residues). The 72-residue stretch at 471–542 (SLLDYKKLVE…FKFFKNIAVN (72 aa)) folds into the PAS domain.

Belongs to the ERT1/acuK family.

It localises to the nucleus. In terms of biological role, transcription factor which regulates nonfermentable carbon utilization. This chain is Glucose starvation modulator protein 1 (GSM1), found in Candida tropicalis (strain ATCC MYA-3404 / T1) (Yeast).